Consider the following 569-residue polypeptide: Zinc finger and BTB domain-containing protein 7A (569 aa).

A BTB domain is found at 34-101 (CDVVILVEGR…AYTATLTVST (68 aa)). A disordered region spans residues 214–304 (YGPGPPADRP…LSGAAEGEDG (91 aa)). The mediates interaction with KHDRBS1 stretch occupies residues 275 to 569 (EEEAAALSEA…VATAEGNFAT (295 aa)). Over residues 279–288 (AALSEAAPEP) the composition is skewed to low complexity. A phosphoserine mark is found at S331 and S335. Positions 343-569 (MDYYLKYFSG…VATAEGNFAT (227 aa)) are mediates interaction with RELA. The mediates interaction with SMAD4 stretch occupies residues 371-569 (RAKAFQKCPI…VATAEGNFAT (199 aa)). C2H2-type zinc fingers lie at residues 376-398 (QKCPICEKVIQGAGKLPRHIRTH) and 404-426 (YECNICKVRFTRQDKLKVHMRKH). K430 is covalently cross-linked (Glycyl lysine isopeptide (Lys-Gly) (interchain with G-Cter in SUMO2)). The segment at 432-454 (YLCQQCGAAFAHNYDLKNHMRVH) adopts a C2H2-type 3 zinc-finger fold. Residues 460–484 (YQCDSCCKTFVRSDHLHRHLKKDGC) form a C2H2-type 4; atypical zinc finger. The disordered stretch occupies residues 480 to 569 (KKDGCNGVPS…VATAEGNFAT (90 aa)). Residues 498 to 519 (RGVPPDVPAGAGAPPGLPDAPR) show a composition bias toward low complexity. K527 participates in a covalent cross-link: Glycyl lysine isopeptide (Lys-Gly) (interchain with G-Cter in SUMO2). Residue S537 is modified to Phosphoserine. Residues 548-557 (GSGGDDGAGG) show a composition bias toward gly residues.

As to quaternary structure, homodimer. Interacts with BCL6. Interacts with RELA; involved in the control by RELA of the accessibility of target gene promoters. Interacts with AR (via NR LBD domain); the interaction is direct and androgen-dependent. Interacts with NCOR1. Interacts with NCOR2. Interacts with SMAD4; the interaction is direct and stimulated by TGFB1. Interacts with HDAC1. Interacts with SP1; ZBTB7A prevents the binding to GC-rich motifs in promoters and represses the transcriptional activity of SP1. Interacts with the DNA-dependent protein kinase complex/DNA-PKc. Interacts with KHDRBS1; negatively regulates KHDRBS1 splicing activity. Sumoylated. Undergoes sumoylation with SUMO1 that may regulate its transcriptional activity. Widely expressed. In normal thymus, expressed in medullary epithelial cells and Hassle's corpuscles (at protein level). In the spleen, mainly expressed in the white pulp germinal centers (at protein level). Up-regulated in thymic lymphomas.

Its subcellular location is the nucleus. Functionally, transcription factor that represses the transcription of a wide range of genes involved in cell proliferation and differentiation. Directly and specifically binds to the consensus sequence 5'-[GA][CA]GACCCCCCCCC-3' and represses transcription both by regulating the organization of chromatin and through the direct recruitment of transcription factors to gene regulatory regions. Negatively regulates SMAD4 transcriptional activity in the TGF-beta signaling pathway through these two mechanisms. That is, recruits the chromatin regulator HDAC1 to the SMAD4-DNA complex and in parallel prevents the recruitment of the transcriptional activators CREBBP and EP300. Collaborates with transcription factors like RELA to modify the accessibility of gene transcription regulatory regions to secondary transcription factors. Also directly interacts with transcription factors like SP1 to prevent their binding to DNA. Functions as an androgen receptor/AR transcriptional corepressor by recruiting NCOR1 and NCOR2 to the androgen response elements/ARE on target genes. Thereby, negatively regulates androgen receptor signaling and androgen-induced cell proliferation. Involved in the switch between fetal and adult globin expression during erythroid cells maturation. Through its interaction with the NuRD complex regulates chromatin at the fetal globin genes to repress their transcription. Specifically represses the transcription of the tumor suppressor ARF isoform from the CDKN2A gene. Efficiently abrogates E2F1-dependent CDKN2A transactivation. Regulates chondrogenesis through the transcriptional repression of specific genes via a mechanism that also requires histone deacetylation. Regulates cell proliferation through the transcriptional regulation of genes involved in glycolysis. Involved in adipogenesis through the regulation of genes involved in adipocyte differentiation. Plays a key role in the differentiation of lymphoid progenitors into B and T lineages. Promotes differentiation towards the B lineage by inhibiting the T-cell instructive Notch signaling pathway through the specific transcriptional repression of Notch downstream target genes. Also regulates osteoclast differentiation. May also play a role, independently of its transcriptional activity, in double-strand break repair via classical non-homologous end joining/cNHEJ. Recruited to double-strand break sites on damage DNA, interacts with the DNA-dependent protein kinase complex and directly regulates its stability and activity in DNA repair. May also modulate the splicing activity of KHDRBS1 toward BCL2L1 in a mechanism which is histone deacetylase-dependent and thereby negatively regulates the pro-apoptotic effect of KHDRBS1. The chain is Zinc finger and BTB domain-containing protein 7A from Mus musculus (Mouse).